The sequence spans 403 residues: Sorting nexin-32 (403 aa).

One can recognise a PX domain in the interval 20–168; that stretch reads LQGDSSLQVE…VFLEYGQDLS (149 aa). The stretch at 258-335 forms a coiled coil; that stretch reads NQLRTSFLKL…KARTRNREVR (78 aa).

It belongs to the sorting nexin family.

In terms of biological role, may be involved in several stages of intracellular trafficking. The protein is Sorting nexin-32 (SNX32) of Homo sapiens (Human).